The sequence spans 718 residues: Auxin response factor 2 (718 aa).

Positions 1-24 are disordered; that stretch reads MVGIDLNTVEEEEDEEEGGATGTV. The span at 8–18 shows a compositional bias: acidic residues; that stretch reads TVEEEEDEEEG. Residues 147 to 249 constitute a DNA-binding region (TF-B3); the sequence is FCKTLTASDT…ELRLGVRRAA (103 aa).

Belongs to the ARF family. In terms of assembly, homo and heterodimers. In terms of tissue distribution, expressed in roots, culms, leaves and young panicles.

It is found in the nucleus. Functionally, auxin response factors (ARFs) are transcriptional factors that bind specifically to the DNA sequence 5'-TGTCTC-3' found in the auxin-responsive promoter elements (AuxREs). The sequence is that of Auxin response factor 2 (ARF2) from Oryza sativa subsp. japonica (Rice).